Reading from the N-terminus, the 337-residue chain is tRNA N6-adenosine threonylcarbamoyltransferase (337 aa).

Fe cation contacts are provided by His-111 and His-115. Substrate is bound by residues 134 to 138 (LVSGG), Asp-167, Gly-180, and Asn-272. Asp-300 is a binding site for Fe cation.

This sequence belongs to the KAE1 / TsaD family. It depends on Fe(2+) as a cofactor.

Its subcellular location is the cytoplasm. It carries out the reaction L-threonylcarbamoyladenylate + adenosine(37) in tRNA = N(6)-L-threonylcarbamoyladenosine(37) in tRNA + AMP + H(+). Functionally, required for the formation of a threonylcarbamoyl group on adenosine at position 37 (t(6)A37) in tRNAs that read codons beginning with adenine. Is involved in the transfer of the threonylcarbamoyl moiety of threonylcarbamoyl-AMP (TC-AMP) to the N6 group of A37, together with TsaE and TsaB. TsaD likely plays a direct catalytic role in this reaction. The polypeptide is tRNA N6-adenosine threonylcarbamoyltransferase (Cronobacter sakazakii (strain ATCC BAA-894) (Enterobacter sakazakii)).